Here is a 113-residue protein sequence, read N- to C-terminus: Class I hydrophobin fvh1 (113 aa).

The first 20 residues, 1 to 20 (MVSFRAFTVAASLFATLAAA), serve as a signal peptide directing secretion. 4 disulfides stabilise this stretch: cysteine 34–cysteine 94, cysteine 41–cysteine 88, cysteine 42–cysteine 75, and cysteine 95–cysteine 108. Asparagine 35 is a glycosylation site (N-linked (GlcNAc...) asparagine). Asparagine 97 is a glycosylation site (N-linked (GlcNAc...) asparagine).

The protein belongs to the fungal hydrophobin family. As to quaternary structure, self-assembles to form functional amyloid fibrils called rodlets. Self-assembly into fibrillar rodlets occurs spontaneously at hydrophobic:hydrophilic interfaces and the rodlets further associate laterally to form amphipathic monolayers.

The protein resides in the secreted. Its subcellular location is the cell wall. In terms of biological role, aerial growth, conidiation, and dispersal of filamentous fungi in the environment rely upon a capability of their secreting small amphipathic proteins called hydrophobins (HPBs) with low sequence identity. Class I can self-assemble into an outermost layer of rodlet bundles on aerial cell surfaces, conferring cellular hydrophobicity that supports fungal growth, development and dispersal; whereas Class II form highly ordered films at water-air interfaces through intermolecular interactions but contribute nothing to the rodlet structure. Fvh1 is a class I hydrophobin involved in fruiting body initiation. This chain is Class I hydrophobin fvh1, found in Flammulina velutipes (Agaricus velutipes).